A 259-amino-acid polypeptide reads, in one-letter code: Ribosome maturation factor RimP (259 aa).

A compositionally biased stretch (basic and acidic residues) spans 186-195 (RGKQAERELK). A disordered region spans residues 186–259 (RGKQAERELK…RGDTDLSEGD (74 aa)). A compositionally biased stretch (basic residues) spans 239–248 (KQHRLAAGRS).

This sequence belongs to the RimP family.

It is found in the cytoplasm. Required for maturation of 30S ribosomal subunits. The chain is Ribosome maturation factor RimP from Rhodopseudomonas palustris (strain HaA2).